A 386-amino-acid chain; its full sequence is O-methyltransferase 10 (386 aa).

Serine 207, glycine 231, aspartate 254, aspartate 274, and lysine 288 together coordinate S-adenosyl-L-homocysteine. Residue aspartate 254 participates in S-adenosyl-L-methionine binding. The active-site Proton acceptor is histidine 292.

This sequence belongs to the class I-like SAM-binding methyltransferase superfamily. Cation-independent O-methyltransferase family. In terms of assembly, homodimer.

It catalyses the reaction dopamine + S-adenosyl-L-methionine = 4-methoxytyramine + S-adenosyl-L-homocysteine + H(+). The catalysed reaction is 3,4-dihydroxy-5-methoxyphenethylamine + S-adenosyl-L-methionine = 3-hydroxy-4,5-dimethoxyphenethylamine + S-adenosyl-L-homocysteine + H(+). It carries out the reaction 3-hydroxy-4,5-dimethoxyphenethylamine + S-adenosyl-L-methionine = mescaline + S-adenosyl-L-homocysteine + H(+). The enzyme catalyses 4-hydroxy-3,5-dimethoxyphenethylamine + S-adenosyl-L-methionine = mescaline + S-adenosyl-L-homocysteine + H(+). It functions in the pathway aromatic compound metabolism. Its pathway is alkaloid biosynthesis. O-methyltransferase participating in the biosynthesis of natural products derived from phenylethylamine, including mescaline, a natural hallucinogen potentially used in psychotherapeutic treatments. Catalyzes the O-methylation of mescaline para hydroxyl groups, using dopamine, 3,4-dihydroxy-5-methoxyphenethylamine, 3-hydroxy-4,5-dimethoxyphenethylamine and 4-hydroxy-3,5-dimethoxyphenethylamine as substrates. The polypeptide is O-methyltransferase 10 (Lophophora williamsii (Peyote)).